Here is an 84-residue protein sequence, read N- to C-terminus: ATP synthase subunit c (84 aa).

Transmembrane regions (helical) follow at residues 1–21 and 53–73; these read MLAW…ALVG and LLFA…VALI.

This sequence belongs to the ATPase C chain family. As to quaternary structure, F-type ATPases have 2 components, F(1) - the catalytic core - and F(0) - the membrane proton channel. F(1) has five subunits: alpha(3), beta(3), gamma(1), delta(1), epsilon(1). F(0) has three main subunits: a(1), b(2) and c(10-14). The alpha and beta chains form an alternating ring which encloses part of the gamma chain. F(1) is attached to F(0) by a central stalk formed by the gamma and epsilon chains, while a peripheral stalk is formed by the delta and b chains.

The protein resides in the cell inner membrane. In terms of biological role, f(1)F(0) ATP synthase produces ATP from ADP in the presence of a proton or sodium gradient. F-type ATPases consist of two structural domains, F(1) containing the extramembraneous catalytic core and F(0) containing the membrane proton channel, linked together by a central stalk and a peripheral stalk. During catalysis, ATP synthesis in the catalytic domain of F(1) is coupled via a rotary mechanism of the central stalk subunits to proton translocation. Functionally, key component of the F(0) channel; it plays a direct role in translocation across the membrane. A homomeric c-ring of between 10-14 subunits forms the central stalk rotor element with the F(1) delta and epsilon subunits. This chain is ATP synthase subunit c, found in Dictyoglomus thermophilum (strain ATCC 35947 / DSM 3960 / H-6-12).